The following is a 478-amino-acid chain: Nuclear distribution protein PAC1 (478 aa).

Residues 9-41 enclose the LisH domain; that stretch reads QAEELHKAMIAYLLSANLPKSAAALREELADSV. A coiled-coil region spans residues 60 to 87; it reads TSVVRLQKKIMDLESRNNALQSELDSAT. 8 WD repeats span residues 113–154, 156–196, 200–247, 250–289, 292–352, 354–393, 398–439, and 440–477; these read SHRE…RTIK, HTKA…KNIR, GHDH…CVKT, GHVD…TKST, GHEH…IKTL, GHDN…KCVR, AHGH…AASA, and INGV…RVFA.

This sequence belongs to the WD repeat LIS1/nudF family. In terms of assembly, self-associates. Interacts with NDL1 and dynein.

The protein localises to the cytoplasm. It is found in the cytoskeleton. It localises to the spindle pole. Functionally, positively regulates the activity of the minus-end directed microtubule motor protein dynein. May enhance dynein-mediated microtubule sliding by targeting dynein to the microtubule plus end. Required for nuclear migration during vegetative growth as well as development. Required for retrograde early endosome (EE) transport from the hyphal tip. Required for localization of dynein to the mitotic spindle poles. Recruits additional proteins to the dynein complex at SPBs. This is Nuclear distribution protein PAC1 from Paracoccidioides brasiliensis (strain Pb18).